We begin with the raw amino-acid sequence, 164 residues long: Transcription elongation factor GreA (164 aa).

This sequence belongs to the GreA/GreB family.

In terms of biological role, necessary for efficient RNA polymerase transcription elongation past template-encoded arresting sites. The arresting sites in DNA have the property of trapping a certain fraction of elongating RNA polymerases that pass through, resulting in locked ternary complexes. Cleavage of the nascent transcript by cleavage factors such as GreA or GreB allows the resumption of elongation from the new 3'terminus. GreA releases sequences of 2 to 3 nucleotides. This Helicobacter pylori (strain Shi470) protein is Transcription elongation factor GreA.